The sequence spans 255 residues: 5-oxoprolinase subunit A (255 aa).

Belongs to the LamB/PxpA family. Forms a complex composed of PxpA, PxpB and PxpC.

It carries out the reaction 5-oxo-L-proline + ATP + 2 H2O = L-glutamate + ADP + phosphate + H(+). Its function is as follows. Catalyzes the cleavage of 5-oxoproline to form L-glutamate coupled to the hydrolysis of ATP to ADP and inorganic phosphate. The sequence is that of 5-oxoprolinase subunit A from Corynebacterium efficiens (strain DSM 44549 / YS-314 / AJ 12310 / JCM 11189 / NBRC 100395).